The chain runs to 428 residues: D-amino acid dehydrogenase (428 aa).

Position 3 to 17 (Val3 to Tyr17) interacts with FAD.

Belongs to the DadA oxidoreductase family. It depends on FAD as a cofactor.

It carries out the reaction a D-alpha-amino acid + A + H2O = a 2-oxocarboxylate + AH2 + NH4(+). It functions in the pathway amino-acid degradation; D-alanine degradation; NH(3) and pyruvate from D-alanine: step 1/1. Its function is as follows. Oxidative deamination of D-amino acids. This chain is D-amino acid dehydrogenase, found in Burkholderia vietnamiensis (strain G4 / LMG 22486) (Burkholderia cepacia (strain R1808)).